A 496-amino-acid polypeptide reads, in one-letter code: Cytosol aminopeptidase (496 aa).

Positions 258 and 263 each coordinate Mn(2+). The active site involves K270. Mn(2+)-binding residues include D281, D340, and E342. The active site involves R344.

The protein belongs to the peptidase M17 family. Requires Mn(2+) as cofactor.

Its subcellular location is the cytoplasm. The enzyme catalyses Release of an N-terminal amino acid, Xaa-|-Yaa-, in which Xaa is preferably Leu, but may be other amino acids including Pro although not Arg or Lys, and Yaa may be Pro. Amino acid amides and methyl esters are also readily hydrolyzed, but rates on arylamides are exceedingly low.. It carries out the reaction Release of an N-terminal amino acid, preferentially leucine, but not glutamic or aspartic acids.. Its function is as follows. Presumably involved in the processing and regular turnover of intracellular proteins. Catalyzes the removal of unsubstituted N-terminal amino acids from various peptides. In Helicobacter pylori (strain ATCC 700392 / 26695) (Campylobacter pylori), this protein is Cytosol aminopeptidase (pepA).